Reading from the N-terminus, the 191-residue chain is Cell division protein SepF (191 aa).

Residues E156–G167 show a composition bias toward polar residues. A disordered region spans residues E156–L191.

It belongs to the SepF family. In terms of assembly, homodimer. Interacts with FtsZ.

Its subcellular location is the cytoplasm. In terms of biological role, cell division protein that is part of the divisome complex and is recruited early to the Z-ring. Probably stimulates Z-ring formation, perhaps through the cross-linking of FtsZ protofilaments. Its function overlaps with FtsA. The polypeptide is Cell division protein SepF (Prochlorococcus marinus (strain NATL2A)).